Consider the following 510-residue polypeptide: D-alanine--D-alanyl carrier protein ligase (510 aa).

Residue 157–158 (TS) participates in ATP binding. Residue Asp202 participates in D-alanine binding. Position 297–302 (297–302 (NTYGPT)) interacts with ATP. Val306 serves as a coordination point for D-alanine. ATP is bound by residues Asp389 and Lys498. Residue Lys498 participates in D-alanine binding.

This sequence belongs to the ATP-dependent AMP-binding enzyme family. DltA subfamily.

The protein localises to the cytoplasm. It carries out the reaction holo-[D-alanyl-carrier protein] + D-alanine + ATP = D-alanyl-[D-alanyl-carrier protein] + AMP + diphosphate. It functions in the pathway cell wall biogenesis; lipoteichoic acid biosynthesis. Its function is as follows. Catalyzes the first step in the D-alanylation of lipoteichoic acid (LTA), the activation of D-alanine and its transfer onto the D-alanyl carrier protein (Dcp) DltC. In an ATP-dependent two-step reaction, forms a high energy D-alanyl-AMP intermediate, followed by transfer of the D-alanyl residue as a thiol ester to the phosphopantheinyl prosthetic group of the Dcp. D-alanylation of LTA plays an important role in modulating the properties of the cell wall in Gram-positive bacteria, influencing the net charge of the cell wall. This chain is D-alanine--D-alanyl carrier protein ligase, found in Listeria innocua serovar 6a (strain ATCC BAA-680 / CLIP 11262).